A 119-amino-acid polypeptide reads, in one-letter code: Immunity protein WapI (119 aa).

Immunity protein component of a toxin-immunity protein module, which functions as a cellular contact-dependent growth inhibition (CDI) system. Neutralizes the tRNase activity of cognate toxin WapA upon expression in E.coli. Does not inhibit WapA from other strains of B.subtilis. The WapA C-terminus cannot be expressed on its own in E.coli, however it can be cloned in the presence of its cognate immunity protein gene. Cell contact is probably necessary for growth inhibition. This is Immunity protein WapI (wapI) from Bacillus subtilis subsp. natto (strain BEST195).